Here is a 450-residue protein sequence, read N- to C-terminus: MRATAAKKVFIKTYGCQMNVYDSQRMGDALAADGYTATDAIDEADLVLLNTCHIREKAAEKVYSELGRIRDMKAERAIAGRELLIGVAGCVAQAEGAEIIRRSPAVDLVIGPQTYHRLPDVLARVRGGEKIVETDYAIEDKFDHLPQPKRAEVIKRGVTAFLTVQEGCDKFCTFCVVPYTRGSEVSRPVAQIVAEAERLAEAGVREVTLLGQNVNAWHGQGENGEEWGLGRLLFRLAEIPGLARLRYTTSHPRDMDDELISAHRDLPSLMPYLHLPVQSGSDRILKAMNRRHTARDYLALLDRIRAARPDIALSGDFIVGFPGETEADFEATMELVRQVNYASAFSFKYSPRPGTPGAEMPDHVPETLKDERLQRLQALLLKQQQGFGSSLVGSTIDTLIEKPGRQAGQKVGRTPWLQPVIVDEKAGEIGDIIQVRITKTGYNSLFAELA.

The 121-residue stretch at 7–127 (KKVFIKTYGC…LPDVLARVRG (121 aa)) folds into the MTTase N-terminal domain. The [4Fe-4S] cluster site is built by cysteine 16, cysteine 52, cysteine 90, cysteine 168, cysteine 172, and cysteine 175. The Radical SAM core domain maps to 154 to 388 (IKRGVTAFLT…LLLKQQQGFG (235 aa)). The TRAM domain maps to 389–450 (SSLVGSTIDT…GYNSLFAELA (62 aa)).

This sequence belongs to the methylthiotransferase family. MiaB subfamily. As to quaternary structure, monomer. [4Fe-4S] cluster is required as a cofactor.

The protein resides in the cytoplasm. It catalyses the reaction N(6)-dimethylallyladenosine(37) in tRNA + (sulfur carrier)-SH + AH2 + 2 S-adenosyl-L-methionine = 2-methylsulfanyl-N(6)-dimethylallyladenosine(37) in tRNA + (sulfur carrier)-H + 5'-deoxyadenosine + L-methionine + A + S-adenosyl-L-homocysteine + 2 H(+). Functionally, catalyzes the methylthiolation of N6-(dimethylallyl)adenosine (i(6)A), leading to the formation of 2-methylthio-N6-(dimethylallyl)adenosine (ms(2)i(6)A) at position 37 in tRNAs that read codons beginning with uridine. The sequence is that of tRNA-2-methylthio-N(6)-dimethylallyladenosine synthase from Mesorhizobium japonicum (strain LMG 29417 / CECT 9101 / MAFF 303099) (Mesorhizobium loti (strain MAFF 303099)).